The primary structure comprises 93 residues: MPRSLKKGPFVDDHLIKKVDTQNEAGTKNVIKTWSRRSMIVPAMLGHTIAVHNGKTHIPVFVTESMVGHKLGEFSPTRTFRGHVKDDRKSKRR.

Residues 73–93 (EFSPTRTFRGHVKDDRKSKRR) form a disordered region. Basic and acidic residues predominate over residues 83–93 (HVKDDRKSKRR).

It belongs to the universal ribosomal protein uS19 family.

Protein S19 forms a complex with S13 that binds strongly to the 16S ribosomal RNA. In Streptomyces coelicolor (strain ATCC BAA-471 / A3(2) / M145), this protein is Small ribosomal subunit protein uS19.